A 293-amino-acid chain; its full sequence is NAD kinase (293 aa).

The active-site Proton acceptor is the aspartate 68. NAD(+)-binding positions include 68–69 (DG), 142–143 (ND), arginine 153, aspartate 172, and 183–188 (TAYSLS).

It belongs to the NAD kinase family. A divalent metal cation is required as a cofactor.

It localises to the cytoplasm. It carries out the reaction NAD(+) + ATP = ADP + NADP(+) + H(+). In terms of biological role, involved in the regulation of the intracellular balance of NAD and NADP, and is a key enzyme in the biosynthesis of NADP. Catalyzes specifically the phosphorylation on 2'-hydroxyl of the adenosine moiety of NAD to yield NADP. This is NAD kinase from Lachnospira eligens (strain ATCC 27750 / DSM 3376 / VPI C15-48 / C15-B4) (Eubacterium eligens).